The primary structure comprises 320 residues: MSVIDIFKKRLQAVSKKPVIIFPEGWSASVLKAVEMLNESKLIQPAVIFHNRQEIPANFDKKITHYVIDEMDLTSYANFVYEKRKHKGMDLKEAQKFVRDPSSLAATLVALKVVDGEVCGKEYATKDTLRPALQLLATGNFVSSVFIMEKGEERLYFTDCAFAVYPNSQELATIAENTFNFAKSLNEDEIKMAFLSYSTLGSGKGEMVDKVVLATKLFLEKHPELHQSVCGELQFDAAFVEKVRLQKAPQLTWKNSANIYVFPNLDAGNIAYKIAQRLGGYDAIGPIVLGLSSPVNDLSRGASVSDIFNVGIITAAQAIK.

This sequence belongs to the phosphate acetyltransferase and butyryltransferase family.

The protein resides in the cytoplasm. It carries out the reaction acetyl-CoA + phosphate = acetyl phosphate + CoA. It participates in metabolic intermediate biosynthesis; acetyl-CoA biosynthesis; acetyl-CoA from acetate: step 2/2. The sequence is that of Phosphate acetyltransferase (pta) from Mycoplasma genitalium (strain ATCC 33530 / DSM 19775 / NCTC 10195 / G37) (Mycoplasmoides genitalium).